A 206-amino-acid chain; its full sequence is BAG family molecular chaperone regulator 1B (206 aa).

In terms of domain architecture, BAG spans 122-202 (IEAYIDELQQ…QYLSKLDSTK (81 aa)). The residue at position 144 (S144) is a Phosphoserine.

In terms of assembly, binds to the ATPase domain of HSP70/HSC chaperones.

Functionally, inhibits the chaperone activity of HSP70/HSC70 by promoting substrate release. The sequence is that of BAG family molecular chaperone regulator 1B (bag102) from Schizosaccharomyces pombe (strain 972 / ATCC 24843) (Fission yeast).